Here is a 441-residue protein sequence, read N- to C-terminus: Proline--tRNA ligase (441 aa).

Belongs to the class-II aminoacyl-tRNA synthetase family. ProS type 2 subfamily. In terms of assembly, homodimer.

The protein resides in the cytoplasm. It carries out the reaction tRNA(Pro) + L-proline + ATP = L-prolyl-tRNA(Pro) + AMP + diphosphate. Its function is as follows. Catalyzes the attachment of proline to tRNA(Pro) in a two-step reaction: proline is first activated by ATP to form Pro-AMP and then transferred to the acceptor end of tRNA(Pro). The sequence is that of Proline--tRNA ligase from Bartonella tribocorum (strain CIP 105476 / IBS 506).